Reading from the N-terminus, the 668-residue chain is Cyclin-dependent kinase 11.2 (668 aa).

Residues 1 to 265 (MSNYSTNGSR…EQWESMTENE (265 aa)) are disordered. Basic and acidic residues-rich tracts occupy residues 35–73 (KTKE…DHRD), 85–127 (YCRD…DSLR), and 140–163 (LPDD…KTVM). A compositionally biased stretch (acidic residues) spans 164-181 (EVEDVEMSPVEMLDEEEV). Basic and acidic residues-rich tracts occupy residues 197–212 (NEPE…DPES) and 245–265 (PDDK…TENE). The region spanning 304–600 (YVILNVIAEG…ASEALQHDWF (297 aa)) is the Protein kinase domain. Residues 310 to 318 (IAEGTYGEV) and lysine 333 each bind ATP. Catalysis depends on aspartate 432, which acts as the Proton acceptor.

This sequence belongs to the protein kinase superfamily. CMGC Ser/Thr protein kinase family. CDC2/CDKX subfamily. In terms of tissue distribution, expressed in somatic cells and at varying levels throughout the germline (at protein level). Highly expressed in the germ line of hermaphrodites (at protein level).

Its subcellular location is the nucleus. The protein resides in the cytoplasm. The enzyme catalyses L-seryl-[protein] + ATP = O-phospho-L-seryl-[protein] + ADP + H(+). It carries out the reaction L-threonyl-[protein] + ATP = O-phospho-L-threonyl-[protein] + ADP + H(+). Its function is as follows. Probable cyclin-dependent kinase whose activity is most likely regulated by the cyclin cyl-1/Cylin-L. Acts partially redundantly with cdk-11.1 to ensure embryonic viability. In contrast to cdk-11.1, not essential for male and female fertility. This chain is Cyclin-dependent kinase 11.2, found in Caenorhabditis elegans.